The primary structure comprises 384 residues: DNA replication and repair protein RecF (384 aa).

30-37 (GENAQGKT) provides a ligand contact to ATP.

This sequence belongs to the RecF family.

Its subcellular location is the cytoplasm. The RecF protein is involved in DNA metabolism; it is required for DNA replication and normal SOS inducibility. RecF binds preferentially to single-stranded, linear DNA. It also seems to bind ATP. This chain is DNA replication and repair protein RecF, found in Levilactobacillus brevis (strain ATCC 367 / BCRC 12310 / CIP 105137 / JCM 1170 / LMG 11437 / NCIMB 947 / NCTC 947) (Lactobacillus brevis).